We begin with the raw amino-acid sequence, 43 residues long: Defensin, isoforms B and C (43 aa).

3 disulfides stabilise this stretch: C3-C34, C20-C40, and C24-C42.

Belongs to the invertebrate defensin family. Type 1 subfamily.

The protein localises to the secreted. In terms of biological role, involved in anti Gram-positive activity of immune hemolymph of Z.atratus. The chain is Defensin, isoforms B and C from Zophobas atratus (Giant mealworm beetle).